Here is a 78-residue protein sequence, read N- to C-terminus: ATP synthase subunit c (78 aa).

The next 2 membrane-spanning stretches (helical) occupy residues 9-29 and 56-76; these read AFIG…GQGW and AAVT…LVFV.

The protein belongs to the ATPase C chain family. As to quaternary structure, F-type ATPases have 2 components, F(1) - the catalytic core - and F(0) - the membrane proton channel. F(1) has five subunits: alpha(3), beta(3), gamma(1), delta(1), epsilon(1). F(0) has three main subunits: a(1), b(2) and c(10-14). The alpha and beta chains form an alternating ring which encloses part of the gamma chain. F(1) is attached to F(0) by a central stalk formed by the gamma and epsilon chains, while a peripheral stalk is formed by the delta and b chains.

Its subcellular location is the cell membrane. Its function is as follows. F(1)F(0) ATP synthase produces ATP from ADP in the presence of a proton or sodium gradient. F-type ATPases consist of two structural domains, F(1) containing the extramembraneous catalytic core and F(0) containing the membrane proton channel, linked together by a central stalk and a peripheral stalk. During catalysis, ATP synthesis in the catalytic domain of F(1) is coupled via a rotary mechanism of the central stalk subunits to proton translocation. Key component of the F(0) channel; it plays a direct role in translocation across the membrane. A homomeric c-ring of between 10-14 subunits forms the central stalk rotor element with the F(1) delta and epsilon subunits. The polypeptide is ATP synthase subunit c (Malacoplasma penetrans (strain HF-2) (Mycoplasma penetrans)).